Here is a 452-residue protein sequence, read N- to C-terminus: Chaperone SurA (452 aa).

A signal peptide spans 1–28; it reads MKKTLRFAAVVSSLAAASALLAAAPAAA. 2 PpiC domains span residues 186 to 288 and 302 to 400; these read QQDL…RLVD and IVQT…QVLS.

It is found in the periplasm. It catalyses the reaction [protein]-peptidylproline (omega=180) = [protein]-peptidylproline (omega=0). Functionally, chaperone involved in the correct folding and assembly of outer membrane proteins. Recognizes specific patterns of aromatic residues and the orientation of their side chains, which are found more frequently in integral outer membrane proteins. May act in both early periplasmic and late outer membrane-associated steps of protein maturation. The protein is Chaperone SurA of Burkholderia lata (strain ATCC 17760 / DSM 23089 / LMG 22485 / NCIMB 9086 / R18194 / 383).